The chain runs to 314 residues: Transcriptional regulatory protein GlnL (314 aa).

One can recognise a Response regulatory domain in the interval 2–118 (RFFIADDDRA…EIVTVLQKVK (117 aa)). Residue Asp-54 is modified to 4-aspartylphosphate.

Phosphorylated by GlnK.

The protein resides in the cytoplasm. Its function is as follows. Member of the two-component regulatory system GlnL/GlnK that positively regulates the expression of the glsA-glnT operon in response to glutamine. GlnL binds the promoter region of glsA-glnT in vitro. This Bacillus subtilis (strain 168) protein is Transcriptional regulatory protein GlnL (glnL).